Consider the following 347-residue polypeptide: Ketol-acid reductoisomerase (NADP(+)) (347 aa).

The KARI N-terminal Rossmann domain occupies 1–185 (MKIYYDEDAN…GGTRAGVLET (185 aa)). NADP(+)-binding positions include 24–27 (YGSQ), Arg47, Ser50, Ser52, and 82–85 (DEFQ). His107 is an active-site residue. An NADP(+)-binding site is contributed by Gly133. The region spanning 186-336 (SFKEETETDL…AELRSKMKFL (151 aa)) is the KARI C-terminal knotted domain. Residues Asp194, Glu198, Glu230, and Glu234 each coordinate Mg(2+). Substrate is bound at residue Ser255.

It belongs to the ketol-acid reductoisomerase family. The cofactor is Mg(2+).

It catalyses the reaction (2R)-2,3-dihydroxy-3-methylbutanoate + NADP(+) = (2S)-2-acetolactate + NADPH + H(+). The enzyme catalyses (2R,3R)-2,3-dihydroxy-3-methylpentanoate + NADP(+) = (S)-2-ethyl-2-hydroxy-3-oxobutanoate + NADPH + H(+). Its pathway is amino-acid biosynthesis; L-isoleucine biosynthesis; L-isoleucine from 2-oxobutanoate: step 2/4. It functions in the pathway amino-acid biosynthesis; L-valine biosynthesis; L-valine from pyruvate: step 2/4. Its function is as follows. Involved in the biosynthesis of branched-chain amino acids (BCAA). Catalyzes an alkyl-migration followed by a ketol-acid reduction of (S)-2-acetolactate (S2AL) to yield (R)-2,3-dihydroxy-isovalerate. In the isomerase reaction, S2AL is rearranged via a Mg-dependent methyl migration to produce 3-hydroxy-3-methyl-2-ketobutyrate (HMKB). In the reductase reaction, this 2-ketoacid undergoes a metal-dependent reduction by NADPH to yield (R)-2,3-dihydroxy-isovalerate. The sequence is that of Ketol-acid reductoisomerase (NADP(+)) from Gamma-proteobacterium EBAC31A08.